The sequence spans 159 residues: Cyclic pyranopterin monophosphate synthase (159 aa).

Residues 74–76 (MCH) and 112–113 (ME) each bind substrate. D127 is a catalytic residue.

The protein belongs to the MoaC family. In terms of assembly, homohexamer; trimer of dimers.

It catalyses the reaction (8S)-3',8-cyclo-7,8-dihydroguanosine 5'-triphosphate = cyclic pyranopterin phosphate + diphosphate. Its pathway is cofactor biosynthesis; molybdopterin biosynthesis. Catalyzes the conversion of (8S)-3',8-cyclo-7,8-dihydroguanosine 5'-triphosphate to cyclic pyranopterin monophosphate (cPMP). In Helicobacter hepaticus (strain ATCC 51449 / 3B1), this protein is Cyclic pyranopterin monophosphate synthase.